The following is a 116-amino-acid chain: Protein Wnt-5b (116 aa).

Residue Ser-1 is the site of O-palmitoleoyl serine; by PORCN attachment. N-linked (GlcNAc...) asparagine glycans are attached at residues Asn-69 and Asn-83. An intrachain disulfide couples Cys-82 to Cys-97.

Belongs to the Wnt family. Post-translationally, palmitoleoylation is required for efficient binding to frizzled receptors. Depalmitoleoylation leads to Wnt signaling pathway inhibition.

The protein resides in the secreted. Its subcellular location is the extracellular space. It is found in the extracellular matrix. Its function is as follows. Ligand for members of the frizzled family of seven transmembrane receptors. Probable developmental protein. May be a signaling molecule which affects the development of discrete regions of tissues. Is likely to signal over only few cell diameters. In Plethodon jordani (Red-cheeked salamander), this protein is Protein Wnt-5b (WNT-5B).